Here is a 128-residue protein sequence, read N- to C-terminus: Mediator of RNA polymerase II transcription subunit 31-A (128 aa).

The protein belongs to the Mediator complex subunit 31 family. Component of the Mediator complex.

The protein localises to the nucleus. In terms of biological role, component of the Mediator complex, a coactivator involved in the regulated transcription of nearly all RNA polymerase II-dependent genes. Mediator functions as a bridge to convey information from gene-specific regulatory proteins to the basal RNA polymerase II transcription machinery. Mediator is recruited to promoters by direct interactions with regulatory proteins and serves as a scaffold for the assembly of a functional preinitiation complex with RNA polymerase II and the general transcription factors. The polypeptide is Mediator of RNA polymerase II transcription subunit 31-A (med31-a) (Xenopus laevis (African clawed frog)).